Reading from the N-terminus, the 307-residue chain is Thioredoxin reductase (307 aa).

36-43 (DNAAPGGK) contacts FAD. An intrachain disulfide couples C138 to C141. 278–287 (DIRIKDIRQI) contributes to the FAD binding site.

It belongs to the class-II pyridine nucleotide-disulfide oxidoreductase family. As to quaternary structure, homodimer. FAD is required as a cofactor.

The protein resides in the cytoplasm. It carries out the reaction [thioredoxin]-dithiol + NADP(+) = [thioredoxin]-disulfide + NADPH + H(+). In Mycoplasmopsis pulmonis (strain UAB CTIP) (Mycoplasma pulmonis), this protein is Thioredoxin reductase (trxB).